The following is a 188-amino-acid chain: ATP synthase subunit delta (188 aa).

This sequence belongs to the ATPase delta chain family. F-type ATPases have 2 components, F(1) - the catalytic core - and F(0) - the membrane proton channel. F(1) has five subunits: alpha(3), beta(3), gamma(1), delta(1), epsilon(1). F(0) has three main subunits: a(1), b(2) and c(10-14). The alpha and beta chains form an alternating ring which encloses part of the gamma chain. F(1) is attached to F(0) by a central stalk formed by the gamma and epsilon chains, while a peripheral stalk is formed by the delta and b chains.

The protein resides in the cell inner membrane. F(1)F(0) ATP synthase produces ATP from ADP in the presence of a proton or sodium gradient. F-type ATPases consist of two structural domains, F(1) containing the extramembraneous catalytic core and F(0) containing the membrane proton channel, linked together by a central stalk and a peripheral stalk. During catalysis, ATP synthesis in the catalytic domain of F(1) is coupled via a rotary mechanism of the central stalk subunits to proton translocation. Functionally, this protein is part of the stalk that links CF(0) to CF(1). It either transmits conformational changes from CF(0) to CF(1) or is implicated in proton conduction. The protein is ATP synthase subunit delta of Paracoccus denitrificans (strain Pd 1222).